The sequence spans 237 residues: MEIIPAIDILGGRCVRLLQGDYAQETVYSPDPVGTAMRWQSLGAPRLHVVDLDGAADGESVNFELIREIANSALIPVEVGGGIRSMDTVKKLLTAGVDRVILGTVAVENPELVREICARYADSVAVSIDARNGKVATRGWVNSTEVDALELARSMKKLGVKRFIYTDISRDGTLSEPNFAAIRDLISAINMPVIASGGVSSLSHLRLLKDIGAEGAIVGKAIYTGDLNLKRAFEELS.

The active-site Proton acceptor is Asp-8. Residue Asp-129 is the Proton donor of the active site.

The protein belongs to the HisA/HisF family.

It localises to the cytoplasm. It catalyses the reaction 1-(5-phospho-beta-D-ribosyl)-5-[(5-phospho-beta-D-ribosylamino)methylideneamino]imidazole-4-carboxamide = 5-[(5-phospho-1-deoxy-D-ribulos-1-ylimino)methylamino]-1-(5-phospho-beta-D-ribosyl)imidazole-4-carboxamide. The protein operates within amino-acid biosynthesis; L-histidine biosynthesis; L-histidine from 5-phospho-alpha-D-ribose 1-diphosphate: step 4/9. This chain is 1-(5-phosphoribosyl)-5-[(5-phosphoribosylamino)methylideneamino] imidazole-4-carboxamide isomerase, found in Dehalococcoides mccartyi (strain ATCC BAA-2266 / KCTC 15142 / 195) (Dehalococcoides ethenogenes (strain 195)).